The sequence spans 249 residues: Putative TrmH family tRNA/rRNA methyltransferase (249 aa).

Positions 196, 216, and 225 each coordinate S-adenosyl-L-methionine.

Belongs to the class IV-like SAM-binding methyltransferase superfamily. RNA methyltransferase TrmH family.

This Staphylococcus epidermidis (strain ATCC 35984 / DSM 28319 / BCRC 17069 / CCUG 31568 / BM 3577 / RP62A) protein is Putative TrmH family tRNA/rRNA methyltransferase.